A 452-amino-acid polypeptide reads, in one-letter code: Multifunctional glycoside hydrolase (452 aa).

The substrate site is built by Gln-17, His-118, and Asn-162. The active-site Proton donor is the Glu-163. Residue Tyr-303 participates in substrate binding. Glu-361 functions as the Nucleophile in the catalytic mechanism. Substrate is bound by residues Trp-407 and 414 to 415 (EW).

It belongs to the glycosyl hydrolase 1 family. As to quaternary structure, monomer. Homotrimer.

The enzyme catalyses Hydrolysis of terminal, non-reducing beta-D-glucosyl residues with release of beta-D-glucose.. It catalyses the reaction Hydrolysis of terminal non-reducing beta-D-galactose residues in beta-D-galactosides.. It carries out the reaction Hydrolysis of (1-&gt;4)-beta-D-xylans, to remove successive D-xylose residues from the non-reducing termini.. The catalysed reaction is Hydrolysis of (1-&gt;4)-linkages in (1-&gt;4)-beta-D-glucans, to remove successive glucose units.. The enzyme catalyses Hydrolysis of (1-&gt;4)-beta-D-glucosidic linkages in cellulose and cellotetraose, releasing cellobiose from the non-reducing ends of the chains.. The protein operates within glycan metabolism; beta-D-glucan degradation. It participates in glycan metabolism; cellulose degradation. Slight activation by Mn(2+), Ni(2+) and K(+). Slight inhibition by Fe(3+), Zn(2+), Co(2+), Mg(2+), Cu(2+), Na(+) and NH4(+). In terms of biological role, has high beta-D-glucosidase, exoglucanase, beta-D-xylosidase, beta-D-galactosidase, and transgalactosylation activities in vitro. Has a very broad substrate specificity with the highest activity with p-nitrophenyl beta-D-galactopyranoside (pNPGal) as substrate. Active with pNP-beta-D-glucopyranoside (pNPGlu), pNP-beta-D-cellobioside (pNPC), lactose, pNP-beta-D-xylopyranoside (pNPX) and cellobiose in the order of decreasing activity, respectively. Very low activity with soluble polysaccharides synanthrin and locust bean gum. Very low, but detectable activity with insoluble substrates such as cotton and filter paper. No activity with pNP-alpha-L-arabinofuranoside (pNPAr) or carboxymethylcellulose (CMC) as substrates. Synthesizes galactooligosaccharides (GalOS) from lactose. Hydrolyzes pretreated corn stover releasing both glucose and xylose. This multifunctional enzyme may provide C.owensensis the benefit of utilizing a wide variety of available carbon sources in its natural growing environment as the ability to convert a wide range of soluble oligosaccharides to monoses is required in order to assimilate them. The chain is Multifunctional glycoside hydrolase from Caldicellulosiruptor owensensis (strain ATCC 700167 / DSM 13100 / OL).